The chain runs to 366 residues: MWPRSHRHLCLAFLLVCVLSAISFLIHFHQDSIRHGLGLSVLCPDRRLVTPAVAIFCLPGTPMSPNTSSSCPQHPASLSGTWTIYPDGRFGNQMGQYATLLALAQLNGRRAFILPAMHAALAPVFRITLPVLAPEVDSRTPWQELRLHDWMSEEYADLGDPFLKLSGFPCSWTFFHHLREQIRSEFTLHDHLREEAQSVLRRLRLGRSGARPRTFVGVHVRRGDYLQVMPQRWKGVVANSAYLREAMDWFRARHEAPVFVVTSNGMEWCRENIDASKGDVMFAGDGQEASPWKDFALLTQCNHTIMTIGTFGFWAAYLAGGDTVYLANFTLPDSEFLKIFKPEAAFLPEWVGINADLSPLWPLAEP.

Topologically, residues M1–H8 are cytoplasmic. A helical; Signal-anchor for type II membrane protein transmembrane segment spans residues L9 to L25. Topologically, residues I26–P366 are lumenal. N-linked (GlcNAc...) asparagine glycans are attached at residues N66, N302, and N328.

The protein belongs to the glycosyltransferase 11 family.

The protein localises to the golgi apparatus. It is found in the golgi stack membrane. The catalysed reaction is a beta-D-galactosyl-(1-&gt;4)-N-acetyl-beta-D-glucosaminyl derivative + GDP-beta-L-fucose = an alpha-L-Fuc-(1-&gt;2)-beta-D-Gal-(1-&gt;4)-beta-D-GlcNAc derivative + GDP + H(+). It carries out the reaction a ganglioside GA1 + GDP-beta-L-fucose = a ganglioside Fuc-GA1 + GDP + H(+). The enzyme catalyses a beta-D-Gal-(1-&gt;3)-beta-D-GlcNAc-(1-&gt;3)-beta-D-Gal-(1-&gt;4)-beta-D-Glc-(1&lt;-&gt;1')-Cer(d18:1(4E)) + GDP-beta-L-fucose = alpha-L-fucosyl-(1-&gt;2)- beta-D-galactosyl-(1-&gt;3)-N-acetyl-beta-D-glucosaminyl-(1-&gt;3)-beta-D-galactosyl-(1-&gt;4)-beta-D-glucosyl-(1&lt;-&gt;1')-N-acylsphing-4-enine + GDP + H(+). It catalyses the reaction a neolactoside nLc4Cer(d18:1(4E)) + GDP-beta-L-fucose = a neolactoside IV(2)-alpha-Fuc-nLc4Cer(d18:1(4E)) + GDP + H(+). The catalysed reaction is a ganglioside GM1 + GDP-beta-L-fucose = a ganglioside Fuc-GM1 + GDP + H(+). It carries out the reaction beta-D-galactosyl-(1-&gt;3)-N-acetyl-D-galactosamine + GDP-beta-L-fucose = alpha-L-fucosyl-(1-&gt;2)-beta-D-galactosyl-(1-&gt;3)-N-acetyl-D-galactosamine + GDP + H(+). The protein operates within protein modification; protein glycosylation. Catalyzes the transfer of L-fucose, from a guanosine diphosphate-beta-L-fucose, to the terminal galactose residue of glycoconjugates through an alpha(1,2) linkage leading to H antigen synthesis that is an intermediate substrate in the synthesis of ABO blood group antigens. H antigen is essential for maturation of the glomerular layer of the main olfactory bulb, in cell migration and early cell-cell contacts during tumor associated angiogenesis. Preferentially fucosylates soluble lactose and to a lesser extent fucosylates glycolipids gangliosides GA1 and GM1a. The chain is Galactoside alpha-(1,2)-fucosyltransferase 1 from Saimiri boliviensis boliviensis (Bolivian squirrel monkey).